The sequence spans 1005 residues: MSVPVVYDKRRNLDCREEKEESNLAFVSQDEQDSSSFTILYEEPLQEEDRYTSAELRGSQSLLFPDTSSMPGLACERSESRTDLVHHFEKEGKLGEAFDGDNSEMFLSVEAKRYKIYPLALSPIYEDDSSQEDVLSSEVSPGHHGSSKSRESANQPSSVLSLLQSVSERLQRNFDGDDRQEAEEEEEEAVASGKDWRTEKREHVTFHLPDPSIPFYPEDNQEHAGIFKSYVEFSEPTTSSLQHGRWSEKELFLQKSDMTSKLHSSLKSAYHQYLQTSRTHSSETGTRFGGTLQEPVSKYFRVQDHAGRLSPYVENVDKQTLKCNPRPGKMIIYDLHGSKYKQEVYCNIPDATTWSFPNGALIKVVRGCWILYEKPHFQGQKCVLEEGERVLDRDWLLQNRKHPERNFVLGSIKRVLKDCSIPVIELCPKTDPGCSPIYIHRSVPNVEELNIPKSTSVTVKSGVWLAYPDIHFKGQATILEEDQGLFEISAAEMKSLHPLQMGGLKVEMPMNLKVILYEKPHFLGHTKEFSEHIDSVPTFLKSDKDFHGIGSIRVIGGVWVAYEKEHFKGQQFLLEEGDFEDSSACGALSGPIMSFRYLQANFIESSITLFESSHLESGKFIDITNQEISDLEEIGFGSETRSIHVKSGVWVAYHQKFFCGDQYILEKGKYKCFFDWGGSSNTILSIRPIQLEPLGINEPTHLLKAFSKAGFQGECIDFVKECADLTSFTPASFKVLRGCWLLLYYQEDGFYHQCVLEEGLYVDLTSCGCPSARIRALQPIDYVFEEPSISLFALEHCEGRELHLEDAVNSVLNKDLHFYTQSVWIKSGLWIAYEGSNFLGRQILLTPKEIPNWTAFSGWKTIGSVRPMKQPAVYIRIRNRAQDEYLTVTGNPADARTMSVCISPYSGKDTQIWHYCRGLFKSKASHTCLDVIGGRDTPGAKVALWTEHGQLRQKWRMSRNGTISSYLSDELVLDVKGGNYYDKTHVIVNQPLEGEETQKWDIEIL.

Serine 122, serine 129, serine 130, serine 136, and serine 140 each carry phosphoserine. 2 disordered regions span residues 132 to 159 and 173 to 198; these read EDVL…PSSV and NFDG…DWRT. Acidic residues predominate over residues 180-189; it reads QEAEEEEEEA. Beta/gamma crystallin 'Greek key' domains are found at residues 367 to 416, 462 to 500, 512 to 556, 557 to 599, 605 to 647, 648 to 690, 701 to 737, 738 to 781, and 828 to 869; these read GCWI…KRVL, GVWL…HPLQ, LKVI…RVIG, GVWV…RYLQ, SSIT…HVKS, GVWV…RPIQ, HLLK…KVLR, GCWL…QPID, and GLWI…RPMK. The Ricin B-type lectin domain occupies 871 to 1003; the sequence is PAVYIRIRNR…GEETQKWDIE (133 aa).

This sequence belongs to the beta/gamma-crystallin family.

The sequence is that of Beta/gamma crystallin domain-containing protein 3 (Crybg3) from Mus musculus (Mouse).